The sequence spans 167 residues: MDKLTIISGCLFLAADIFAIASIANPDWINTGGQEGALTVGLVKQCQTIHGRNRICVSPSLPPEWVTTLFFIILGIVSLTITCGLLVISHWRREATKYARWIAFMGMVLFCMAALIFPVGFYINQVGGQPYKLPNNTVVGSSYVLFVLSIFFTIVGLLFAGKVCLPG.

Helical transmembrane passes span Ile7–Ile29, Thr68–Ile88, Trp101–Phe121, and Val139–Phe159.

It localises to the cell projection. Its subcellular location is the cilium membrane. The protein resides in the cell membrane. Acts as a negative regulator of hedgehog signaling probably by promoting internalization and subsequent degradation of smoothened protein (SMO) present in the ciliary membrane. Plays a role in sonic hedgehog (SHH)-induced spinal neural progenitor cells differentiation. The polypeptide is Modulator of smoothened protein (Danio rerio (Zebrafish)).